Reading from the N-terminus, the 386-residue chain is S-adenosylmethionine synthase (386 aa).

Histidine 16 contributes to the ATP binding site. Aspartate 18 provides a ligand contact to Mg(2+). Residue glutamate 44 coordinates K(+). Residues glutamate 57 and glutamine 100 each contribute to the L-methionine site. The segment at 100 to 110 (QSSDIAQGVDR) is flexible loop. Residues 165 to 167 (DAK), aspartate 240, 246 to 247 (RK), alanine 263, and lysine 267 each bind ATP. Position 240 (aspartate 240) interacts with L-methionine. Residue lysine 271 coordinates L-methionine.

The protein belongs to the AdoMet synthase family. As to quaternary structure, homotetramer; dimer of dimers. The cofactor is Mg(2+). It depends on K(+) as a cofactor.

It localises to the cytoplasm. The catalysed reaction is L-methionine + ATP + H2O = S-adenosyl-L-methionine + phosphate + diphosphate. It participates in amino-acid biosynthesis; S-adenosyl-L-methionine biosynthesis; S-adenosyl-L-methionine from L-methionine: step 1/1. Functionally, catalyzes the formation of S-adenosylmethionine (AdoMet) from methionine and ATP. The overall synthetic reaction is composed of two sequential steps, AdoMet formation and the subsequent tripolyphosphate hydrolysis which occurs prior to release of AdoMet from the enzyme. This Francisella philomiragia subsp. philomiragia (strain ATCC 25017 / CCUG 19701 / FSC 153 / O#319-036) protein is S-adenosylmethionine synthase.